Consider the following 258-residue polypeptide: Aspartate/glutamate leucyltransferase (258 aa).

Belongs to the R-transferase family. Bpt subfamily.

Its subcellular location is the cytoplasm. It carries out the reaction N-terminal L-glutamyl-[protein] + L-leucyl-tRNA(Leu) = N-terminal L-leucyl-L-glutamyl-[protein] + tRNA(Leu) + H(+). The catalysed reaction is N-terminal L-aspartyl-[protein] + L-leucyl-tRNA(Leu) = N-terminal L-leucyl-L-aspartyl-[protein] + tRNA(Leu) + H(+). Functions in the N-end rule pathway of protein degradation where it conjugates Leu from its aminoacyl-tRNA to the N-termini of proteins containing an N-terminal aspartate or glutamate. This chain is Aspartate/glutamate leucyltransferase, found in Rhodopseudomonas palustris (strain TIE-1).